A 534-amino-acid polypeptide reads, in one-letter code: Protein tweety homolog 2 (534 aa).

Residues 1-44 are Extracellular-facing; the sequence is MAAARVEYIAPWWVYWLHNFPHVDLSLRQKSPDFNPKDPGYQQT. The helical transmembrane segment at 45–65 threads the bilayer; it reads LLFVALIVALCAAVNLLFVSV. The Cytoplasmic portion of the chain corresponds to 66-87; that stretch reads YLICLCCCKKEDETETKKTSSC. The chain crosses the membrane as a helical span at residues 88–108; it reads CVTWTAAVSGLLCCAAVGIGF. Topologically, residues 109 to 213 are extracellular; the sequence is YGNSETNDGV…QTSTIEYYRW (105 aa). Positions 113 and 116 each coordinate Ca(2+). The N-linked (GlcNAc...) asparagine glycan is linked to asparagine 129. Positions 164-166 match the RGD motif; it reads RGD. Asparagine 197 is a glycosylation site (N-linked (GlcNAc...) asparagine). The helical transmembrane segment at 214–234 threads the bilayer; sequence LSYLLLFISYVVICLVTCVGL. Topologically, residues 235–240 are cytoplasmic; it reads AKKSKC. A helical transmembrane segment spans residues 241–261; it reads LLLIMLCFGLIALMLSWTSLA. Residues 262 to 388 are Extracellular-facing; that stretch reads LETSSAMGTS…IGICYDGVEG (127 aa). Intrachain disulfides connect cysteine 274–cysteine 382 and cysteine 300–cysteine 367. Residues asparagine 283 and asparagine 352 are each glycosylated (N-linked (GlcNAc...) asparagine). The chain crosses the membrane as a helical span at residues 389–409; it reads MLYLGLFSLLAALAFTAMVCA. At 410–534 the chain is on the cytoplasmic side; the sequence is MPQAWKHLEA…SSIYSNVFPA (125 aa).

Belongs to the tweety family. As to quaternary structure, forms cis-homodimers in the presence of Ca(+2) and forms monomers and trans-dimers in the absence of Ca(2+).

The protein resides in the cell membrane. The enzyme catalyses chloride(in) = chloride(out). The catalysed reaction is L-glutamate(out) = L-glutamate(in). Functionally, may act as a calcium-independent, swelling-dependent volume-regulated anion channel (VRAC-swell) which plays a pivotal role in the process of regulatory volume decrease (RVD) in the brain through the efflux of anions like chloride and organic osmolytes like glutamate. Probable large-conductance Ca(2+)-activated chloride channel. The protein is Protein tweety homolog 2 (ttyh2) of Xenopus tropicalis (Western clawed frog).